The sequence spans 111 residues: UPF0060 membrane protein xcc-b100_1273 (111 aa).

The next 4 membrane-spanning stretches (helical) occupy residues 8–28, 34–54, 62–82, and 91–111; these read LLLFVATAVAELVGCYLPYLW, SVWLLLPAALSLAVFVWLLTL, VYAAYGGVYIATALLWLWWVD, and LLGAGCCLLGMAIIMFSPRSG.

Belongs to the UPF0060 family.

It is found in the cell inner membrane. In Xanthomonas campestris pv. campestris (strain B100), this protein is UPF0060 membrane protein xcc-b100_1273.